The chain runs to 328 residues: Pancreas transcription factor 1 subunit alpha (328 aa).

The bHLH domain occupies 163 to 215 (QLRQAANVRERRRMQSINDAFEGLRSHIPTLPYEKRLSKVDTLRLAIGYINFL). 2 disordered regions span residues 259 to 278 (RGTR…PLAG) and 305 to 328 (DPRK…EFVS).

Component of the pancreas transcription factor 1 complex (PTF1) which is composed of TCF3/p75, TCF12/p64 and PTF1A/p48. TCF3 is responsible for the nuclear import of the p48/p64 complex. Interacts with TCF3 and RBPSUH/RBP-Jkappa. As to expression, pancreas-specific (at protein level). Loss of expression is seen in ductal type pancreas cancers.

It localises to the nucleus. It is found in the cytoplasm. In terms of biological role, transcription factor implicated in the cell fate determination in various organs. Binds to the E-box consensus sequence 5'-CANNTG-3'. Plays a role in early and late pancreas development and differentiation. Important for determining whether cells allocated to the pancreatic buds continue towards pancreatic organogenesis or revert back to duodenal fates. May be involved in the maintenance of exocrine pancreas-specific gene expression including ELA1 and amylase. Required for the formation of pancreatic acinar and ductal cells. Plays an important role in cerebellar development. Directly regulated by FOXN4 and RORC during retinal development, FOXN4-PTF1A pathway plays a central role in directing the differentiation of retinal progenitors towards horizontal and amacrine fates. The chain is Pancreas transcription factor 1 subunit alpha (PTF1A) from Homo sapiens (Human).